The sequence spans 110 residues: Large ribosomal subunit protein uL22 (110 aa).

It belongs to the universal ribosomal protein uL22 family. Part of the 50S ribosomal subunit.

Its function is as follows. This protein binds specifically to 23S rRNA; its binding is stimulated by other ribosomal proteins, e.g. L4, L17, and L20. It is important during the early stages of 50S assembly. It makes multiple contacts with different domains of the 23S rRNA in the assembled 50S subunit and ribosome. Functionally, the globular domain of the protein is located near the polypeptide exit tunnel on the outside of the subunit, while an extended beta-hairpin is found that lines the wall of the exit tunnel in the center of the 70S ribosome. This is Large ribosomal subunit protein uL22 from Photobacterium profundum (strain SS9).